Reading from the N-terminus, the 472-residue chain is Protein hedgehog (472 aa).

The N-palmitoyl cysteine moiety is linked to residue Cys-84. Ca(2+) contacts are provided by Glu-149, Asp-154, Glu-185, Asp-188, and Asp-190. Gly-256 carries Cholesterol glycine ester lipidation.

This sequence belongs to the hedgehog family. In terms of assembly, interacts with shf. In terms of processing, the C-terminal part of the hedgehog protein precursor displays an autoproteolysis activity that results in the cleavage of the full-length protein into two parts (N-product and C-product). In addition, the C-terminal part displays a cholesterol transferase activity that results by the covalent attachment of a cholesterol moiety to the C-terminal of the newly generated N-product. The N-product is the active species in both local and long-range signaling, whereas the C-product has no signaling activity. Cholesterylation is required for N-product targeting to lipid rafts and multimerization. Post-translationally, N-palmitoylation by Rasp of the hedgehog N-product, within the secretory pathway, is required for the embryonic and larval patterning activities of the hedgehog signal.

It localises to the nucleus. Its subcellular location is the cytoplasm. The protein resides in the cell membrane. The enzyme catalyses glycyl-L-cysteinyl-[protein] + cholesterol + H(+) = [protein]-C-terminal glycyl cholesterol ester + N-terminal L-cysteinyl-[protein]. In terms of biological role, the C-terminal part of the hedgehog protein precursor displays an autoproteolysis activity that results in the cleavage of the full-length protein into two parts (N-product and C-product). In addition, the C-terminal part displays a cholesterol transferase activity that results by the covalent attachment of a cholesterol moiety to the C-terminal of the newly generated N-product. Once cleaved, the C-product has no signaling activity and diffuses from the cell. Its function is as follows. The dually lipidated hedgehog protein N-product is a morphogen which is essential for a variety of patterning events during development. Establishes the anterior-posterior axis of the embryonic segments and patterns the larval imaginal disks. Binds to the patched (ptc) receptor, which functions in association with smoothened (smo), to activate the transcription of target genes wingless (wg), decapentaplegic (dpp) and ptc. In the absence of hh, ptc represses the constitutive signaling activity of smo through fused (fu). Essential component of a signaling pathway which regulates the Duox-dependent gut immune response to bacterial uracil; required to activate Cad99C-dependent endosome formation, norpA-dependent Ca2+ mobilization and p38 MAPK, which are essential steps in the Duox-dependent production of reactive oxygen species (ROS) in response to intestinal bacterial infection. During photoreceptor differentiation, it up-regulates transcription of Ubr3, which in turn promotes the hh-signaling pathway by mediating the ubiquitination and degradation of cos. The polypeptide is Protein hedgehog (Drosophila ananassae (Fruit fly)).